We begin with the raw amino-acid sequence, 41 residues long: Pi-stichotoxin-Hcr5b (41 aa).

Cystine bridges form between Cys4/Cys37, Cys6/Cys30, and Cys20/Cys38.

Belongs to the sea anemone type 3 (BDS) potassium channel toxin family.

It is found in the secreted. The protein resides in the nematocyst. In terms of biological role, remarkably non-selective toxin, with activity on many different ion channels. Weakly and reversibly inhibits rat and human homomeric ASIC1 (isoform ASIC1a) (IC(50)=4.8 uM, and IC(50)=14.6 uM), and ASIC3 (IC(50)=15.9 uM). Molecular modeling interaction with ASIC1a suggests that this peptide hinders the collapse of acidic pockets and stabilizes nonconducting channels state. It activates several potassium channels including Kv1.1/KCNA1, Kv1.2/KCNA2, and drosophila Shaker IR. It moderately to potently inhibits potassium channels including Kv1.3/KCNA3, Kv1.4/KCNA4, Kv1.5/KCNA5, Kv1.6/KCNA6, Kv2.1/KCNB1, Kv4.2/KCND2, Kv7.1/KCNQ1, Kv7.2/Kv7.3 (KCNQ2/KCNQ3), Kv7.4/KCNQ4, hERG/KCNH2, and C.elegans QKT1. On sodium channels, it moderately to potently inhibits Nav1.1/SCN1A, Nav1.2/SCN2A, Nav1.3/SCN3A, Nav1.4/SCN4A, Nav1.5/SCN5A, Nav1.6/SCN8A, Nav1.7/SCN9A, Nav1.8/SCN10A, and B.germanica BgNav. It also moderately to potently inhibits Cav3.1/CACNA1G, Cav3.2/CACNA1H, and Cav3.3/CACNA1I. Significant shifts in the voltage-current relationship are observed on Kv and Nav, depending on the channel isoform, whereas the toxin does not seem to modulate the voltage-sensor domains of Cav channels, acting mainly as a pore blocker. Does not activate nicotinic acetylcholine receptors (nAChR), but potentiates ACh-elicited current of human alpha-7/CHRNA7 nAChR. Is also able to bind T.californica muscle-type nAChRs. In vivo, causes an excitatory effect in mice behavior. Also shows antihyperalgesic and analgesic activity in the acid-induced muscle pain mice model, and weak anti-inflammatory effect in models of acute local inflammation. This is Pi-stichotoxin-Hcr5b from Radianthus crispa (Leathery sea anemone).